Reading from the N-terminus, the 98-residue chain is UPF0235 protein Mmc1_3654 (98 aa).

Belongs to the UPF0235 family.

This is UPF0235 protein Mmc1_3654 from Magnetococcus marinus (strain ATCC BAA-1437 / JCM 17883 / MC-1).